The following is a 56-amino-acid chain: Male-specific sperm protein Mst87F (56 aa).

It belongs to the MST(3)CGP family. Testis.

The sequence is that of Male-specific sperm protein Mst87F (Mst87F) from Drosophila melanogaster (Fruit fly).